Here is a 497-residue protein sequence, read N- to C-terminus: Glucose-6-phosphate 1-dehydrogenase (497 aa).

NADP(+) is bound by residues 17-24 (GASGDLAK), R51, and K151. D-glucose 6-phosphate is bound by residues K151, 181-185 (HYLGK), E219, and D238. The Proton acceptor role is filled by H243. Residue K334 coordinates NADP(+). 2 residues coordinate D-glucose 6-phosphate: K337 and R342. Positions 343, 347, and 371 each coordinate NADP(+). Residue Q373 coordinates D-glucose 6-phosphate. NADP(+) contacts are provided by residues 379 to 381 (YLK), 399 to 401 (DLS), R465, and W487.

It belongs to the glucose-6-phosphate dehydrogenase family.

The protein resides in the cytoplasm. Its subcellular location is the cytosol. It catalyses the reaction D-glucose 6-phosphate + NADP(+) = 6-phospho-D-glucono-1,5-lactone + NADPH + H(+). It participates in carbohydrate degradation; pentose phosphate pathway; D-ribulose 5-phosphate from D-glucose 6-phosphate (oxidative stage): step 1/3. In terms of biological role, cytosolic glucose-6-phosphate dehydrogenase that catalyzes the first and rate-limiting step of the oxidative branch within the pentose phosphate pathway/shunt, an alternative route to glycolysis for the dissimilation of carbohydrates and a major source of reducing power and metabolic intermediates for fatty acid and nucleic acid biosynthetic processes. The sequence is that of Glucose-6-phosphate 1-dehydrogenase (g6pd-1) from Dictyostelium discoideum (Social amoeba).